A 380-amino-acid polypeptide reads, in one-letter code: Cytochrome b (380 aa).

4 helical membrane passes run 34-54 (FGSLLGICLMTQILTGLLLAM), 78-99 (WLIRNLHANGASFFFICIYLHI), 114-134 (WNTGVILLLTLMATAFVGYVL), and 179-199 (FFALHFLLPFMIAGLTLVHLT). His-84 and His-98 together coordinate heme b. Positions 183 and 197 each coordinate heme b. His-202 lines the a ubiquinone pocket. 4 helical membrane passes run 227-247 (LKDILGFTLMFLLLTTLALFS), 289-309 (LGGVLALAASVLILFLAPFLH), 321-341 (LSQLLFWVLVANLFILTWVGS), and 348-368 (FIIIGQLASFTYFTILLILFP).

It belongs to the cytochrome b family. As to quaternary structure, the cytochrome bc1 complex contains 11 subunits: 3 respiratory subunits (MT-CYB, CYC1 and UQCRFS1), 2 core proteins (UQCRC1 and UQCRC2) and 6 low-molecular weight proteins (UQCRH/QCR6, UQCRB/QCR7, UQCRQ/QCR8, UQCR10/QCR9, UQCR11/QCR10 and a cleavage product of UQCRFS1). This cytochrome bc1 complex then forms a dimer. The cofactor is heme b.

It is found in the mitochondrion inner membrane. Component of the ubiquinol-cytochrome c reductase complex (complex III or cytochrome b-c1 complex) that is part of the mitochondrial respiratory chain. The b-c1 complex mediates electron transfer from ubiquinol to cytochrome c. Contributes to the generation of a proton gradient across the mitochondrial membrane that is then used for ATP synthesis. This is Cytochrome b (MT-CYB) from Procellaria westlandica (Westland petrel).